The primary structure comprises 62 residues: Light-harvesting protein B-870 alpha chain (62 aa).

The residue at position 1 (Met1) is an N-formylmethionine. At 1–12 (MWRIWQLFDPRQ) the chain is on the cytoplasmic side. Residues 13-33 (ALVGLATFLFVLALLIHFILL) form a helical membrane-spanning segment. His29 lines the a bacteriochlorophyll pocket. The Periplasmic segment spans residues 34–52 (STERFNWLEGASTKPVQTS). A propeptide spanning residues 53–62 (MVMPSSDLAV) is cleaved from the precursor.

This sequence belongs to the antenna complex alpha subunit family. As to quaternary structure, the core complex is formed by different alpha and beta chains, binding bacteriochlorophyll molecules, and arranged most probably in tetrameric structures disposed around the reaction center. The non-pigmented gamma chains may constitute additional components.

It is found in the cell inner membrane. In terms of biological role, antenna complexes are light-harvesting systems, which transfer the excitation energy to the reaction centers. The polypeptide is Light-harvesting protein B-870 alpha chain (Rhodospirillum rubrum).